Here is a 424-residue protein sequence, read N- to C-terminus: UPF0229 protein ECA2349 (424 aa).

Positions 53-111 (SIPNADINEPMFHQGRGGHRHRVHPGNDHFVQNDKIERPQGGGGSGSGQGDASKDGEGD) are disordered. Residues 77–90 (PGNDHFVQNDKIER) are compositionally biased toward basic and acidic residues. A compositionally biased stretch (gly residues) spans 92 to 101 (QGGGGSGSGQ).

Belongs to the UPF0229 family.

The protein is UPF0229 protein ECA2349 of Pectobacterium atrosepticum (strain SCRI 1043 / ATCC BAA-672) (Erwinia carotovora subsp. atroseptica).